We begin with the raw amino-acid sequence, 1178 residues long: Mannosyltransferase regulator 4 (1178 aa).

Topologically, residues 1-27 are cytoplasmic; that stretch reads MLQRISSKLHRRFLSGLLRVKHYPLRR. The helical; Signal-anchor for type II membrane protein transmembrane segment at 28 to 48 threads the bilayer; that stretch reads ILLPLILLQIIIITFIWSNSP. At 49-1178 the chain is on the lumenal side; it reads QRNGLGRDAD…KKKQEEGHSN (1130 aa). Positions 519–521 match the DXD motif; it reads DFD. The tract at residues 1041–1178 is disordered; it reads EKKKKEEEEK…KKKQEEGHSN (138 aa). Tandem repeats lie at residues 1042–1049, 1050–1057, 1058–1065, 1066–1073, 1074–1081, and 1082–1089. The tract at residues 1042–1174 is 17 X 8 AA tandem repeats of K-K-K-K-E-E-E-E; sequence KKKKEEEEKK…EEEEKKKQEE (133 aa). Residues 1090–1097 form a 7; approximate repeat; it reads KKKQEEEE. Repeat 8 spans residues 1098 to 1105; the sequence is KKKKEEEE. A 9; approximate repeat occupies 1106–1113; that stretch reads KKKQEEGE. Residues 1114–1121 form a 10; approximate repeat; the sequence is KMKNEDEE. Residues 1122-1129 form an 11; approximate repeat; it reads NKKNEDEE. Repeat unit 12 spans residues 1130–1137; sequence KKKNEEEE. A 13; approximate repeat occupies 1138 to 1144; it reads KKKQEEK. One copy of the 14; approximate repeat lies at 1145–1152; sequence NKKNEDEE. Residues 1153-1160 form a 15; approximate repeat; that stretch reads KKKQEEEE. A 16; approximate repeat occupies 1161–1168; the sequence is KKKNEEEE. Residues 1169–1174 form a 17; truncated repeat; it reads KKKQEE.

Belongs to the MNN4 family.

The protein localises to the golgi apparatus membrane. Golgi apparatus protein involved in N-glycan mannosylphosphorylation. While MNN4 seems to have a regulatory role in N-glycan mannosylphosphorylation, a transferase activity of MNN4 can not be ruled out. Mediates mannosylphosphate transfer in both the core and outer chain portions of N-linked oligosaccharides. Has partially redundant function with MNN14. The polypeptide is Mannosyltransferase regulator 4 (Saccharomyces cerevisiae (strain ATCC 204508 / S288c) (Baker's yeast)).